The following is a 181-amino-acid chain: Inner membrane-spanning protein YciB (181 aa).

The next 5 membrane-spanning stretches (helical) occupy residues 10–30 (LIIF…GALI), 50–70 (MQLI…ALHD), 80–100 (IVYV…KPAI), 120–140 (WAWV…AYHL), and 148–168 (FKVF…GGYI).

The protein belongs to the YciB family.

The protein resides in the cell inner membrane. Plays a role in cell envelope biogenesis, maintenance of cell envelope integrity and membrane homeostasis. The sequence is that of Inner membrane-spanning protein YciB from Vibrio cholerae serotype O1 (strain ATCC 39541 / Classical Ogawa 395 / O395).